A 148-amino-acid polypeptide reads, in one-letter code: Large ribosomal subunit protein uL15 (148 aa).

A disordered region spans residues 1 to 51 (MNLSNLKPAEGSTKTRKRIGRGPGSGLGGTSTRGHKGAKSRSGYKNKIGFE). Gly residues predominate over residues 21–31 (RGPGSGLGGTS). Positions 33–44 (RGHKGAKSRSGY) are enriched in basic residues.

Belongs to the universal ribosomal protein uL15 family. In terms of assembly, part of the 50S ribosomal subunit.

Functionally, binds to the 23S rRNA. This chain is Large ribosomal subunit protein uL15, found in Parabacteroides distasonis (strain ATCC 8503 / DSM 20701 / CIP 104284 / JCM 5825 / NCTC 11152).